We begin with the raw amino-acid sequence, 309 residues long: 4-diphosphocytidyl-2-C-methyl-D-erythritol kinase (309 aa).

Lys-11 is an active-site residue. 94-104 provides a ligand contact to ATP; sequence PVAAGLAGGSA. Residue Asp-136 is part of the active site.

The protein belongs to the GHMP kinase family. IspE subfamily.

It carries out the reaction 4-CDP-2-C-methyl-D-erythritol + ATP = 4-CDP-2-C-methyl-D-erythritol 2-phosphate + ADP + H(+). The protein operates within isoprenoid biosynthesis; isopentenyl diphosphate biosynthesis via DXP pathway; isopentenyl diphosphate from 1-deoxy-D-xylulose 5-phosphate: step 3/6. Its function is as follows. Catalyzes the phosphorylation of the position 2 hydroxy group of 4-diphosphocytidyl-2C-methyl-D-erythritol. This Synechococcus sp. (strain JA-3-3Ab) (Cyanobacteria bacterium Yellowstone A-Prime) protein is 4-diphosphocytidyl-2-C-methyl-D-erythritol kinase.